The sequence spans 189 residues: Blue copper protein (189 aa).

The signal sequence occupies residues 1-24 (MAFSNALVLCFLLAIINMALPSLA). Residues 25-124 (TVYTVGDTSG…GMKLSIKVKA (100 aa)) form the Phytocyanin domain. Cu cation is bound by residues His-65, Cys-106, and His-111. Cysteines 78 and 106 form a disulfide. Residues 127 to 160 (GSSAAPSATPSSSGKGSPSSDDTPAATTTTTTPT) show a composition bias toward low complexity. The interval 127–165 (GSSAAPSATPSSSGKGSPSSDDTPAATTTTTTPTKQNES) is disordered. N-linked (GlcNAc...) asparagine glycosylation occurs at Asn-163.

The sequence is that of Blue copper protein from Pisum sativum (Garden pea).